Consider the following 378-residue polypeptide: uncharacterized protein (378 aa).

A run of 11 helical transmembrane segments spans residues Ser-12–Phe-34, Val-44–Gly-66, Ser-92–Ile-112, Gly-132–Ala-154, Glu-161–Thr-180, Thr-200–Met-222, Val-235–Val-257, Val-267–Ala-285, Leu-290–Ile-312, Phe-327–Ile-349, and Leu-356–Leu-373.

Its subcellular location is the cell membrane. This is an uncharacterized protein from Aquifex aeolicus (strain VF5).